A 353-amino-acid polypeptide reads, in one-letter code: ATPase GET3 (353 aa).

26–33 contributes to the ATP binding site; the sequence is KGGVGKTT. Residue D57 is part of the active site. Residues E244 and N271 each contribute to the ATP site. 2 residues coordinate Zn(2+): C284 and C287.

Belongs to the arsA ATPase family. As to quaternary structure, homodimer. Component of the Golgi to ER traffic (GET) complex, which is composed of GET1, GET2 and GET3. Within the complex, GET1 and GET2 form a heterotetramer which is stabilized by phosphatidylinositol binding and which binds to the GET3 homodimer. Interacts with the chloride channel protein GEF1.

It localises to the cytoplasm. It is found in the endoplasmic reticulum. The protein resides in the golgi apparatus. ATPase required for the post-translational delivery of tail-anchored (TA) proteins to the endoplasmic reticulum. Recognizes and selectively binds the transmembrane domain of TA proteins in the cytosol. This complex then targets to the endoplasmic reticulum by membrane-bound receptors GET1 and GET2, where the tail-anchored protein is released for insertion. This process is regulated by ATP binding and hydrolysis. ATP binding drives the homodimer towards the closed dimer state, facilitating recognition of newly synthesized TA membrane proteins. ATP hydrolysis is required for insertion. Subsequently, the homodimer reverts towards the open dimer state, lowering its affinity for the GET1-GET2 receptor, and returning it to the cytosol to initiate a new round of targeting. Cooperates with the HDEL receptor ERD2 to mediate the ATP-dependent retrieval of resident ER proteins that contain a C-terminal H-D-E-L retention signal from the Golgi to the ER. Involved in low-level resistance to the oxyanions arsenite and arsenate, and in heat tolerance. In Zygosaccharomyces rouxii (strain ATCC 2623 / CBS 732 / NBRC 1130 / NCYC 568 / NRRL Y-229), this protein is ATPase GET3.